The sequence spans 127 residues: Aspartate 1-decarboxylase (127 aa).

The Schiff-base intermediate with substrate; via pyruvic acid role is filled by S25. S25 is subject to Pyruvic acid (Ser). T57 contacts substrate. The active-site Proton donor is Y58. 73–75 (GAA) serves as a coordination point for substrate.

The protein belongs to the PanD family. Heterooctamer of four alpha and four beta subunits. The cofactor is pyruvate. Post-translationally, is synthesized initially as an inactive proenzyme, which is activated by self-cleavage at a specific serine bond to produce a beta-subunit with a hydroxyl group at its C-terminus and an alpha-subunit with a pyruvoyl group at its N-terminus.

It localises to the cytoplasm. The enzyme catalyses L-aspartate + H(+) = beta-alanine + CO2. Its pathway is cofactor biosynthesis; (R)-pantothenate biosynthesis; beta-alanine from L-aspartate: step 1/1. In terms of biological role, catalyzes the pyruvoyl-dependent decarboxylation of aspartate to produce beta-alanine. The sequence is that of Aspartate 1-decarboxylase from Bacillus cereus (strain G9842).